The chain runs to 355 residues: Neutral protease 2 homolog AFUB_100460 (355 aa).

The first 19 residues, 1–19 (MKITALASAILAVAQGALA), serve as a signal peptide directing secretion. Residues 20–172 (LPARAPALDI…PASIKPLDRR (153 aa)) constitute a propeptide that is removed on maturation. 2 disulfide bridges follow: Cys-179–Cys-251 and Cys-258–Cys-276. His-300 provides a ligand contact to Zn(2+). Glu-301 is a catalytic residue. Positions 304 and 315 each coordinate Zn(2+).

Belongs to the peptidase M35 family. Zn(2+) serves as cofactor.

It localises to the secreted. The enzyme catalyses Preferential cleavage of bonds with hydrophobic residues in P1'. Also 3-Asn-|-Gln-4 and 8-Gly-|-Ser-9 bonds in insulin B chain.. Its function is as follows. Secreted metalloproteinase that allows assimilation of proteinaceous substrates. Shows high activities on basic nuclear substrates such as histone and protamine. May be involved in virulence. The chain is Neutral protease 2 homolog AFUB_100460 from Aspergillus fumigatus (strain CBS 144.89 / FGSC A1163 / CEA10) (Neosartorya fumigata).